Here is a 116-residue protein sequence, read N- to C-terminus: Large ribosomal subunit protein P2 (116 aa).

A disordered region spans residues 60–116 (GKLSSMPSGGGVAAAAGGGGAAAGGGGAAPAAEEKKEEKKEESEEESDDDMGFGLFD). Positions 67–87 (SGGGVAAAAGGGGAAAGGGGA) are enriched in gly residues. Basic and acidic residues predominate over residues 91 to 101 (AEEKKEEKKEE).

The protein belongs to the eukaryotic ribosomal protein P1/P2 family. As to quaternary structure, P1 and P2 exist as dimers at the large ribosomal subunit. Phosphorylated.

Plays an important role in the elongation step of protein synthesis. The sequence is that of Large ribosomal subunit protein P2 from Branchiostoma floridae (Florida lancelet).